Consider the following 296-residue polypeptide: N-acetylmuramic acid 6-phosphate etherase 2 (296 aa).

One can recognise an SIS domain in the interval 55–218 (IIKSFNQGGR…STISMIGIGK (164 aa)). E83 serves as the catalytic Proton donor. The active site involves E114.

Belongs to the GCKR-like family. MurNAc-6-P etherase subfamily. Homodimer.

The catalysed reaction is N-acetyl-D-muramate 6-phosphate + H2O = N-acetyl-D-glucosamine 6-phosphate + (R)-lactate. It participates in amino-sugar metabolism; N-acetylmuramate degradation. Its function is as follows. Specifically catalyzes the cleavage of the D-lactyl ether substituent of MurNAc 6-phosphate, producing GlcNAc 6-phosphate and D-lactate. The chain is N-acetylmuramic acid 6-phosphate etherase 2 from Enterococcus faecalis (strain ATCC 700802 / V583).